The primary structure comprises 369 residues: Cyclin-dependent kinase 5 activator 2 (369 aa).

Residues 1–11 show a composition bias toward polar residues; the sequence is MGTVLSLSPAS. 3 disordered regions span residues 1–55, 72–176, and 330–369; these read MGTV…SRLK, ASAK…SPRR, and EAAA…NLDR. Residue Gly2 is the site of N-myristoyl glycine attachment. Residues 74–84 show a composition bias toward basic residues; the sequence is AKKKKGSKKVT. Residue Thr84 is modified to Phosphothreonine. Basic and acidic residues predominate over residues 99–112; that stretch reads RNRENLLRKGRDGP. Positions 122 to 144 are enriched in low complexity; that stretch reads AVPVPTVPTTAATCEPPSGGSAA. Residues 145–171 are compositionally biased toward pro residues; it reads APPPGSGGGKPPPPPPPAPQAAPPAPG. Low complexity predominate over residues 331–352; the sequence is AAASTGGPPSGSSASTTSSSSA.

Belongs to the cyclin-dependent kinase 5 activator family. Heterodimer of a catalytic subunit and a regulatory subunit. Myristoylated. The Gly-2-Ala mutant is absent of the cell periphery, suggesting that a proper myristoylation signal is essential for the proper distribution of CDK5R2 (p39).

The protein localises to the cell membrane. In terms of biological role, activator of CDK5/TPKII. This is Cyclin-dependent kinase 5 activator 2 (Cdk5r2) from Mus musculus (Mouse).